The sequence spans 427 residues: Trigger factor (427 aa).

A PPIase FKBP-type domain is found at 163-248 (GDTVVIDFVG…IHEVKAKEVP (86 aa)).

It belongs to the FKBP-type PPIase family. Tig subfamily.

The protein localises to the cytoplasm. It carries out the reaction [protein]-peptidylproline (omega=180) = [protein]-peptidylproline (omega=0). Involved in protein export. Acts as a chaperone by maintaining the newly synthesized protein in an open conformation. Functions as a peptidyl-prolyl cis-trans isomerase. In Streptococcus pneumoniae (strain ATCC 700669 / Spain 23F-1), this protein is Trigger factor.